The following is a 169-amino-acid chain: Ribosome maturation factor RimM (169 aa).

The 73-residue stretch at 97–169 folds into the PRC barrel domain; that stretch reads EDEYYWTDLV…TITADWGLDY (73 aa).

Belongs to the RimM family. As to quaternary structure, binds ribosomal protein uS19.

The protein localises to the cytoplasm. Its function is as follows. An accessory protein needed during the final step in the assembly of 30S ribosomal subunit, possibly for assembly of the head region. Essential for efficient processing of 16S rRNA. May be needed both before and after RbfA during the maturation of 16S rRNA. It has affinity for free ribosomal 30S subunits but not for 70S ribosomes. The protein is Ribosome maturation factor RimM of Neisseria meningitidis serogroup B (strain ATCC BAA-335 / MC58).